The sequence spans 203 residues: Small ribosomal subunit protein uS2 (203 aa).

Belongs to the universal ribosomal protein uS2 family.

This Methanoregula boonei (strain DSM 21154 / JCM 14090 / 6A8) protein is Small ribosomal subunit protein uS2.